We begin with the raw amino-acid sequence, 652 residues long: Acetyl-coenzyme A synthetase (652 aa).

Residues 191–194, threonine 311, and asparagine 335 contribute to the CoA site; that span reads RAGR. Residues 387-389, 411-416, aspartate 500, and arginine 515 contribute to the ATP site; these read GEP and DTWWQT. Serine 523 contributes to the CoA binding site. Arginine 526 is a binding site for ATP. Mg(2+)-binding residues include valine 537, histidine 539, and isoleucine 542. CoA is bound at residue arginine 584. The residue at position 609 (lysine 609) is an N6-acetyllysine.

It belongs to the ATP-dependent AMP-binding enzyme family. Mg(2+) serves as cofactor. Post-translationally, acetylated. Deacetylation by the SIR2-homolog deacetylase activates the enzyme.

It catalyses the reaction acetate + ATP + CoA = acetyl-CoA + AMP + diphosphate. Functionally, catalyzes the conversion of acetate into acetyl-CoA (AcCoA), an essential intermediate at the junction of anabolic and catabolic pathways. Acs undergoes a two-step reaction. In the first half reaction, Acs combines acetate with ATP to form acetyl-adenylate (AcAMP) intermediate. In the second half reaction, it can then transfer the acetyl group from AcAMP to the sulfhydryl group of CoA, forming the product AcCoA. Its function is as follows. Enables the cell to use acetate during aerobic growth to generate energy via the TCA cycle, and biosynthetic compounds via the glyoxylate shunt. Acetylates CheY, the response regulator involved in flagellar movement and chemotaxis. The polypeptide is Acetyl-coenzyme A synthetase (Escherichia coli O157:H7).